Reading from the N-terminus, the 281-residue chain is Shikimate dehydrogenase (NADP(+)) (281 aa).

Shikimate is bound by residues 14–16 (SRS) and Thr61. Lys65 functions as the Proton acceptor in the catalytic mechanism. Asn86 and Asp101 together coordinate shikimate. NADP(+) contacts are provided by residues 127-131 (GAGGA), 151-156 (NRTLAR), and Val216. Tyr218 lines the shikimate pocket. Position 239 (Gly239) interacts with NADP(+).

The protein belongs to the shikimate dehydrogenase family. As to quaternary structure, homodimer.

The catalysed reaction is shikimate + NADP(+) = 3-dehydroshikimate + NADPH + H(+). It participates in metabolic intermediate biosynthesis; chorismate biosynthesis; chorismate from D-erythrose 4-phosphate and phosphoenolpyruvate: step 4/7. Its function is as follows. Involved in the biosynthesis of the chorismate, which leads to the biosynthesis of aromatic amino acids. Catalyzes the reversible NADPH linked reduction of 3-dehydroshikimate (DHSA) to yield shikimate (SA). This is Shikimate dehydrogenase (NADP(+)) from Azorhizobium caulinodans (strain ATCC 43989 / DSM 5975 / JCM 20966 / LMG 6465 / NBRC 14845 / NCIMB 13405 / ORS 571).